The chain runs to 615 residues: Dihydroxy-acid dehydratase (615 aa).

Residue D81 coordinates Mg(2+). C122 lines the [2Fe-2S] cluster pocket. The Mg(2+) site is built by D123 and K124. N6-carboxylysine is present on K124. A [2Fe-2S] cluster-binding site is contributed by C195. E491 contacts Mg(2+). S517 (proton acceptor) is an active-site residue.

It belongs to the IlvD/Edd family. In terms of assembly, homodimer. [2Fe-2S] cluster serves as cofactor. Mg(2+) is required as a cofactor.

It catalyses the reaction (2R)-2,3-dihydroxy-3-methylbutanoate = 3-methyl-2-oxobutanoate + H2O. The catalysed reaction is (2R,3R)-2,3-dihydroxy-3-methylpentanoate = (S)-3-methyl-2-oxopentanoate + H2O. Its pathway is amino-acid biosynthesis; L-isoleucine biosynthesis; L-isoleucine from 2-oxobutanoate: step 3/4. It participates in amino-acid biosynthesis; L-valine biosynthesis; L-valine from pyruvate: step 3/4. Functions in the biosynthesis of branched-chain amino acids. Catalyzes the dehydration of (2R,3R)-2,3-dihydroxy-3-methylpentanoate (2,3-dihydroxy-3-methylvalerate) into 2-oxo-3-methylpentanoate (2-oxo-3-methylvalerate) and of (2R)-2,3-dihydroxy-3-methylbutanoate (2,3-dihydroxyisovalerate) into 2-oxo-3-methylbutanoate (2-oxoisovalerate), the penultimate precursor to L-isoleucine and L-valine, respectively. The sequence is that of Dihydroxy-acid dehydratase from Novosphingobium aromaticivorans (strain ATCC 700278 / DSM 12444 / CCUG 56034 / CIP 105152 / NBRC 16084 / F199).